A 78-amino-acid chain; its full sequence is MAFRENVLEILEEITETDEVVQNTNIKLFDEGLLDSMATVQLLIEIEERLDITVPVSEFDRDEWATPEMIITQLEALK.

Positions 1–78 (MAFRENVLEI…MIITQLEALK (78 aa)) constitute a Carrier domain. The residue at position 36 (S36) is an O-(pantetheine 4'-phosphoryl)serine.

Belongs to the DltC family. 4'-phosphopantetheine is transferred from CoA to a specific serine of apo-DCP.

It localises to the cytoplasm. It functions in the pathway cell wall biogenesis; lipoteichoic acid biosynthesis. Carrier protein involved in the D-alanylation of lipoteichoic acid (LTA). The loading of thioester-linked D-alanine onto DltC is catalyzed by D-alanine--D-alanyl carrier protein ligase DltA. The DltC-carried D-alanyl group is further transferred to cell membrane phosphatidylglycerol (PG) by forming an ester bond, probably catalyzed by DltD. D-alanylation of LTA plays an important role in modulating the properties of the cell wall in Gram-positive bacteria, influencing the net charge of the cell wall. The protein is D-alanyl carrier protein of Listeria monocytogenes serotype 4a (strain HCC23).